A 439-amino-acid chain; its full sequence is Guanine deaminase (439 aa).

Zn(2+) is bound by residues histidine 82 and histidine 84. Residues 84-87, 209-210, 237-240, and aspartate 327 contribute to the substrate site; these read HYPQ, RF, and HLCE. Zn(2+) is bound by residues histidine 237 and aspartate 327.

The protein belongs to the metallo-dependent hydrolases superfamily. ATZ/TRZ family. Requires Zn(2+) as cofactor.

The catalysed reaction is guanine + H2O + H(+) = xanthine + NH4(+). The protein operates within purine metabolism; guanine degradation; xanthine from guanine: step 1/1. Catalyzes the hydrolytic deamination of guanine, producing xanthine and ammonia. The polypeptide is Guanine deaminase (guaD) (Escherichia coli (strain K12)).